Here is an 853-residue protein sequence, read N- to C-terminus: Dynamin-A (853 aa).

Residues 22 to 296 form the Dynamin-type G domain; that stretch reads PLDLPQIVVV…LMFHIRDTLP (275 aa). Positions 32-39 are G1 motif; that stretch reads GSQSSGKS. GTP is bound at residue 32–40; sequence GSQSSGKSS. The segment at 58 to 60 is G2 motif; that stretch reads VTR. The interval 138–141 is G3 motif; sequence DLPG. A G4 motif region spans residues 207-210; the sequence is TKLD. Residues 207 to 213 and 238 to 241 each bind GTP; these read TKLDLMD and NRSQ. Residues 237–240 are G5 motif; it reads INRS. 2 stretches are compositionally biased toward low complexity: residues 523 to 569 and 590 to 607; these read DQYQ…QQNQ and PAQQQPNQQPNQLNKGPQ. The tract at residues 523–738 is disordered; the sequence is DQYQQQQQQQ…RYQDDFYGRG (216 aa). Positions 610–624 are enriched in polar residues; sequence PPNQSKPSSIPQNGP. Low complexity-rich tracts occupy residues 625 to 635 and 664 to 728; these read NNNNNNNNNNN and NNSN…SSYN. Positions 762–853 constitute a GED domain; sequence TELIRELLIS…IINEIRDFRN (92 aa).

The protein belongs to the TRAFAC class dynamin-like GTPase superfamily. Dynamin/Fzo/YdjA family.

It is found in the cytoplasm. Functionally, function in membrane trafficking processes along the endo-lysosomal pathway. This is Dynamin-A (dymA) from Dictyostelium discoideum (Social amoeba).